A 426-amino-acid polypeptide reads, in one-letter code: Histidine--tRNA ligase (426 aa).

Belongs to the class-II aminoacyl-tRNA synthetase family.

It localises to the cytoplasm. The catalysed reaction is tRNA(His) + L-histidine + ATP = L-histidyl-tRNA(His) + AMP + diphosphate + H(+). The polypeptide is Histidine--tRNA ligase (Saccharolobus islandicus (strain L.S.2.15 / Lassen #1) (Sulfolobus islandicus)).